Here is a 367-residue protein sequence, read N- to C-terminus: Serine/threonine-protein kinase Sgk2 (367 aa).

A disordered region spans residues 1–28; that stretch reads MASSPVGVPSPQPSRANGNINLGPSANP. Ser10 is modified (phosphoserine). The segment covering 15 to 28 has biased composition (polar residues); sequence RANGNINLGPSANP. Positions 35-292 constitute a Protein kinase domain; the sequence is FDFLKVIGKG…FLDIKNHMFF (258 aa). Residues 41-49 and Lys64 each bind ATP; that span reads IGKGNYGKV. A Nuclear localization signal motif is present at residues 68-77; sequence KKSILKNKEQ. Asp159 acts as the Proton acceptor in catalysis. Phosphothreonine; by PDPK1 is present on Thr193. The AGC-kinase C-terminal domain occupies 293–367; it reads SPINWDDLYH…AQDDDDILDS (75 aa). Phosphoserine is present on residues Ser334 and Ser356. Position 357 is a phosphotyrosine (Tyr357).

This sequence belongs to the protein kinase superfamily. AGC Ser/Thr protein kinase family. Post-translationally, activated by phosphorylation on Ser-356 by an unknown kinase (may be mTORC2 but not confirmed), transforming it into a substrate for PDPK1 which then phosphorylates it on Thr-193. In terms of tissue distribution, expressed in the proximal tubule and thick ascending limb of the loop of Henle (TALH).

The protein localises to the cytoplasm. It is found in the nucleus. The enzyme catalyses L-seryl-[protein] + ATP = O-phospho-L-seryl-[protein] + ADP + H(+). It catalyses the reaction L-threonyl-[protein] + ATP = O-phospho-L-threonyl-[protein] + ADP + H(+). With respect to regulation, two specific sites, one in the kinase domain (Thr-193) and the other in the C-terminal regulatory region (Ser-356), need to be phosphorylated for its full activation. In terms of biological role, serine/threonine-protein kinase which is involved in the regulation of a wide variety of ion channels, membrane transporters, cell growth, survival and proliferation. Up-regulates Na(+) channels: SCNN1A/ENAC, K(+) channels: KCNA3/Kv1.3, KCNE1 and KCNQ1, amino acid transporter: SLC6A19, glutamate transporter: SLC1A6/EAAT4, glutamate receptors: GRIA1/GLUR1 and GRIK2/GLUR6, Na(+)/H(+) exchanger: SLC9A3/NHE3, and the Na(+)/K(+) ATPase. The chain is Serine/threonine-protein kinase Sgk2 (Sgk2) from Rattus norvegicus (Rat).